The chain runs to 463 residues: Glutamate--tRNA ligase 2 (463 aa).

Residues 10–20 carry the 'HIGH' region motif; it reads PSPTGFLHIGS. The 'KMSKS' region signature appears at 239-243; it reads KLSKR. K242 lines the ATP pocket.

It belongs to the class-I aminoacyl-tRNA synthetase family. Glutamate--tRNA ligase type 1 subfamily. As to quaternary structure, monomer.

Its subcellular location is the cytoplasm. It carries out the reaction tRNA(Glu) + L-glutamate + ATP = L-glutamyl-tRNA(Glu) + AMP + diphosphate. Catalyzes the attachment of glutamate to tRNA(Glu) in a two-step reaction: glutamate is first activated by ATP to form Glu-AMP and then transferred to the acceptor end of tRNA(Glu). The chain is Glutamate--tRNA ligase 2 from Rickettsia akari (strain Hartford).